A 266-amino-acid chain; its full sequence is Signal peptidase I (266 aa).

Residues 1 to 20 (MQTDNTKSNTNKTAKQEWGS) lie on the Cytoplasmic side of the membrane. A helical membrane pass occupies residues 21–41 (FAFVICIALLIRILIMEPFNV). Over 42–266 (PTGSMKATIL…IFRNLYNTDA (225 aa)) the chain is Extracellular. Active-site residues include serine 45 and lysine 108.

This sequence belongs to the peptidase S26 family.

The protein localises to the cell membrane. The catalysed reaction is Cleavage of hydrophobic, N-terminal signal or leader sequences from secreted and periplasmic proteins.. This chain is Signal peptidase I (lepB), found in Rickettsia conorii (strain ATCC VR-613 / Malish 7).